The primary structure comprises 337 residues: tRNA N6-adenosine threonylcarbamoyltransferase (337 aa).

Residues histidine 111 and histidine 115 each coordinate Fe cation. Residues 134-138, aspartate 167, glycine 180, and asparagine 272 contribute to the substrate site; that span reads LVSGG. Residue aspartate 300 participates in Fe cation binding.

Belongs to the KAE1 / TsaD family. Fe(2+) is required as a cofactor.

It localises to the cytoplasm. It carries out the reaction L-threonylcarbamoyladenylate + adenosine(37) in tRNA = N(6)-L-threonylcarbamoyladenosine(37) in tRNA + AMP + H(+). Required for the formation of a threonylcarbamoyl group on adenosine at position 37 (t(6)A37) in tRNAs that read codons beginning with adenine. Is involved in the transfer of the threonylcarbamoyl moiety of threonylcarbamoyl-AMP (TC-AMP) to the N6 group of A37, together with TsaE and TsaB. TsaD likely plays a direct catalytic role in this reaction. The polypeptide is tRNA N6-adenosine threonylcarbamoyltransferase (Photorhabdus laumondii subsp. laumondii (strain DSM 15139 / CIP 105565 / TT01) (Photorhabdus luminescens subsp. laumondii)).